Reading from the N-terminus, the 149-residue chain is Nucleoside diphosphate kinase (149 aa).

6 residues coordinate ATP: K9, F57, R85, T91, R102, and N112. The Pros-phosphohistidine intermediate role is filled by H115.

Belongs to the NDK family. Mg(2+) serves as cofactor.

It is found in the cytoplasm. It catalyses the reaction a 2'-deoxyribonucleoside 5'-diphosphate + ATP = a 2'-deoxyribonucleoside 5'-triphosphate + ADP. It carries out the reaction a ribonucleoside 5'-diphosphate + ATP = a ribonucleoside 5'-triphosphate + ADP. Its function is as follows. Major role in the synthesis of nucleoside triphosphates other than ATP. The ATP gamma phosphate is transferred to the NDP beta phosphate via a ping-pong mechanism, using a phosphorylated active-site intermediate. The protein is Nucleoside diphosphate kinase of Methanococcoides burtonii (strain DSM 6242 / NBRC 107633 / OCM 468 / ACE-M).